The following is a 283-amino-acid chain: 4-hydroxy-3-methylbut-2-enyl diphosphate reductase (283 aa).

Residue cysteine 12 participates in [4Fe-4S] cluster binding. (2E)-4-hydroxy-3-methylbut-2-enyl diphosphate is bound by residues histidine 40 and histidine 73. Dimethylallyl diphosphate contacts are provided by histidine 40 and histidine 73. Isopentenyl diphosphate is bound by residues histidine 40 and histidine 73. A [4Fe-4S] cluster-binding site is contributed by cysteine 95. A (2E)-4-hydroxy-3-methylbut-2-enyl diphosphate-binding site is contributed by histidine 123. Histidine 123 provides a ligand contact to dimethylallyl diphosphate. Residue histidine 123 participates in isopentenyl diphosphate binding. Glutamate 125 functions as the Proton donor in the catalytic mechanism. Residue threonine 161 participates in (2E)-4-hydroxy-3-methylbut-2-enyl diphosphate binding. Cysteine 189 is a [4Fe-4S] cluster binding site. Residues serine 217, asparagine 219, and serine 261 each contribute to the (2E)-4-hydroxy-3-methylbut-2-enyl diphosphate site. 3 residues coordinate dimethylallyl diphosphate: serine 217, asparagine 219, and serine 261. Isopentenyl diphosphate is bound by residues serine 217, asparagine 219, and serine 261.

The protein belongs to the IspH family. The cofactor is [4Fe-4S] cluster.

The catalysed reaction is isopentenyl diphosphate + 2 oxidized [2Fe-2S]-[ferredoxin] + H2O = (2E)-4-hydroxy-3-methylbut-2-enyl diphosphate + 2 reduced [2Fe-2S]-[ferredoxin] + 2 H(+). It carries out the reaction dimethylallyl diphosphate + 2 oxidized [2Fe-2S]-[ferredoxin] + H2O = (2E)-4-hydroxy-3-methylbut-2-enyl diphosphate + 2 reduced [2Fe-2S]-[ferredoxin] + 2 H(+). It functions in the pathway isoprenoid biosynthesis; dimethylallyl diphosphate biosynthesis; dimethylallyl diphosphate from (2E)-4-hydroxy-3-methylbutenyl diphosphate: step 1/1. The protein operates within isoprenoid biosynthesis; isopentenyl diphosphate biosynthesis via DXP pathway; isopentenyl diphosphate from 1-deoxy-D-xylulose 5-phosphate: step 6/6. In terms of biological role, catalyzes the conversion of 1-hydroxy-2-methyl-2-(E)-butenyl 4-diphosphate (HMBPP) into a mixture of isopentenyl diphosphate (IPP) and dimethylallyl diphosphate (DMAPP). Acts in the terminal step of the DOXP/MEP pathway for isoprenoid precursor biosynthesis. The chain is 4-hydroxy-3-methylbut-2-enyl diphosphate reductase from Citrifermentans bemidjiense (strain ATCC BAA-1014 / DSM 16622 / JCM 12645 / Bem) (Geobacter bemidjiensis).